The chain runs to 466 residues: 3-isopropylmalate dehydratase large subunit (466 aa).

Residues C347, C407, and C410 each coordinate [4Fe-4S] cluster.

The protein belongs to the aconitase/IPM isomerase family. LeuC type 1 subfamily. Heterodimer of LeuC and LeuD. It depends on [4Fe-4S] cluster as a cofactor.

The catalysed reaction is (2R,3S)-3-isopropylmalate = (2S)-2-isopropylmalate. Its pathway is amino-acid biosynthesis; L-leucine biosynthesis; L-leucine from 3-methyl-2-oxobutanoate: step 2/4. Functionally, catalyzes the isomerization between 2-isopropylmalate and 3-isopropylmalate, via the formation of 2-isopropylmaleate. The chain is 3-isopropylmalate dehydratase large subunit from Pseudoalteromonas translucida (strain TAC 125).